The following is a 617-amino-acid chain: Putative type VI secretion system protein VgrGB (617 aa).

Residues 449–469 (RTFHATNPSPYPLPASKTRTS) form a disordered region.

Belongs to the VgrG protein family.

A Vgr protein that is probably part of a type VI secretion system (T6SS). May be required for export of proteins involved in Rhs-mediated cellular contact-dependent growth inhibition (CDI). In Dickeya dadantii (strain 3937) (Erwinia chrysanthemi (strain 3937)), this protein is Putative type VI secretion system protein VgrGB (vgrGB).